The following is a 196-amino-acid chain: Probable thymidylate kinase (196 aa).

Position 8 to 15 (8 to 15 (GIDASGKT)) interacts with ATP.

It belongs to the thymidylate kinase family.

The catalysed reaction is dTMP + ATP = dTDP + ADP. This is Probable thymidylate kinase from Metallosphaera sedula (strain ATCC 51363 / DSM 5348 / JCM 9185 / NBRC 15509 / TH2).